The sequence spans 570 residues: Sulfite reductase [NADPH] hemoprotein beta-component (570 aa).

The [4Fe-4S] cluster site is built by cysteine 434, cysteine 440, cysteine 479, and cysteine 483. Cysteine 483 contributes to the siroheme binding site.

This sequence belongs to the nitrite and sulfite reductase 4Fe-4S domain family. Alpha(8)-beta(8). The alpha component is a flavoprotein, the beta component is a hemoprotein. It depends on siroheme as a cofactor. The cofactor is [4Fe-4S] cluster.

The catalysed reaction is hydrogen sulfide + 3 NADP(+) + 3 H2O = sulfite + 3 NADPH + 4 H(+). It participates in sulfur metabolism; hydrogen sulfide biosynthesis; hydrogen sulfide from sulfite (NADPH route): step 1/1. Functionally, component of the sulfite reductase complex that catalyzes the 6-electron reduction of sulfite to sulfide. This is one of several activities required for the biosynthesis of L-cysteine from sulfate. This Shigella dysenteriae serotype 1 (strain Sd197) protein is Sulfite reductase [NADPH] hemoprotein beta-component.